We begin with the raw amino-acid sequence, 166 residues long: Ureidoglycolate lyase (166 aa).

It belongs to the ureidoglycolate lyase family. In terms of assembly, homodimer. It depends on Ni(2+) as a cofactor.

It carries out the reaction (S)-ureidoglycolate = urea + glyoxylate. The protein operates within nitrogen metabolism; (S)-allantoin degradation. Its function is as follows. Catalyzes the catabolism of the allantoin degradation intermediate (S)-ureidoglycolate, generating urea and glyoxylate. Involved in the utilization of allantoin as nitrogen source. In Rhizobium leguminosarum bv. trifolii (strain WSM2304), this protein is Ureidoglycolate lyase.